We begin with the raw amino-acid sequence, 162 residues long: Proepiregulin (162 aa).

The N-terminal stretch at 1-22 is a signal peptide; the sequence is METFPAAWVLALLCLGSHLLQA. The propeptide occupies 23 to 55; it reads VISTTVIPSCIPEESEDNCTALVQMEDDPRVAQ. N-linked (GlcNAc...) asparagine glycosylation occurs at asparagine 40. Positions 57-97 constitute an EGF-like domain; sequence LITKCSSDMDGYCLHGHCIYLVDMSEKYCRCEVGYTGLRCE. Cystine bridges form between cysteine 61/cysteine 74, cysteine 69/cysteine 85, and cysteine 87/cysteine 96. The propeptide at 102–162 is removed in mature form; it reads TVHQPLSREY…TSGGPGLPQV (61 aa). The helical transmembrane segment at 113 to 133 threads the bilayer; sequence ALTVILVFLFLIVTAGSMYYF.

In terms of assembly, interacts with EGFR and ERBB4.

It localises to the secreted. Its subcellular location is the extracellular space. The protein resides in the cell membrane. Its function is as follows. Ligand of the EGF receptor/EGFR and ERBB4. Stimulates EGFR and ERBB4 tyrosine phosphorylation. Contributes to inflammation, wound healing, tissue repair, and oocyte maturation by regulating angiogenesis and vascular remodeling and by stimulating cell proliferation. The chain is Proepiregulin (Ereg) from Rattus norvegicus (Rat).